The sequence spans 659 residues: Protein kinase byr2 (659 aa).

The 64-residue stretch at 4 to 67 folds into the SAM domain; it reads YTSKEVAEWL…LKQRDYLREF (64 aa). A compositionally biased stretch (low complexity) spans 180-190; sequence PKLSSVLPTST. 2 disordered regions span residues 180–209 and 354–387; these read PKLS…YQRP and SFSP…EEDT. The span at 354–365 shows a compositional bias: polar residues; it reads SFSPGSSPSFIE. Residues 367-380 show a composition bias toward low complexity; the sequence is PSPISPTSTTSEDT. The Protein kinase domain occupies 394-658; sequence WIRGALIGSG…ASELLSHPFV (265 aa). ATP-binding positions include 400–408 and K423; that span reads IGSGSFGQV. Catalysis depends on D522, which acts as the Proton acceptor.

It belongs to the protein kinase superfamily. STE Ser/Thr protein kinase family. MAP kinase kinase kinase subfamily. Interacts with rad24 and rad25; these prevent its translocation to the cell membrane during nitrogen starvation.

It localises to the cytoplasm. Its subcellular location is the cell membrane. The enzyme catalyses L-seryl-[protein] + ATP = O-phospho-L-seryl-[protein] + ADP + H(+). It carries out the reaction L-threonyl-[protein] + ATP = O-phospho-L-threonyl-[protein] + ADP + H(+). In terms of biological role, serine/threonine protein kinase involved in conjugation and sporulation. It is thought that it phosphorylates the byr1 protein kinase which itself phosphorylate the spk1 kinase. This is Protein kinase byr2 from Schizosaccharomyces pombe (strain 972 / ATCC 24843) (Fission yeast).